The chain runs to 1132 residues: MDHRKSVDFTNEYIKQQTENQNHTPRGHRMMANFTIRKWNSETNFNEDDYGAIPTKSSIANLLNKFLKSRPTKDDLEMNKILKSEYKPITLRYSLIEILCNHIEKYALEQEGIFRVSGSNQQIRLFWQTFTTDNIEFPINEHNVAGALKLYIREQSEPLVPYEMFSNFISQLGDGGPVTFTAITNLMSKITPENLKIIKRLIRTAVIIVRHSQLNKMDANNMGIVFGPNIFKSRPDSPNIFSEAKYSNESVSFLISNYLNVFPDLEIPILGTETNTEENELLNNNNNNNNVIMPTTTTTTTSASSSILPTDSSNNNGGGSASSPVTKSIPLSSIGSSSTSPIISPSSSSSSSPIVGTNLTTGSIHSTSPTPFSLLATTTSTTTTNSNKVNSIINSTSQSKSQLLPIHPSLLDTNQMIERVEGNPLSQMKRKDFSITHHLSTKLQKTKHFRKEEIWDCFLILKVSGNLVNVKNSTTTTTTSTSTSTSTSTSTSTSSTTTNQPNSITQSNSASNNSLINNGKIKKSTTNLISQSNSQSSLQLNQTNSNNNNIVTLTPVYILITSQNVFFFDTRIYNIQYILPHSRLKEISVDVVNKGLFSILDGESHKLSFFLVPRPRVIDLLVRSLERGRAIAKLTNKSLASLQSRKFPLLESNSGAGGTSNFGKLPESRPVFESLAQNGFTELDVWEGTVDLLEVVKKFHHILIPSADQSKCVVEFLLPAIPEFKGIYRKSYKLDSKTTVYKIICLICEKAKLEPSKFLLRTLKGRTLFDNKSLGDFGLGTLFTSWQLRLIALESPESTGNFVVEFLMPDIPEFKGMQKKAIKVDAYQPLKRIMKGLCDKLKIPNHHYYHLIGPEGEVLGDNDVLSSIGLGIKYKTCKMKLAKKVFPVGKNPELDTPMVRSLVIDNIIGLAWSKIKDRHNERIRLYCKQMLDYIVDQTFVEIAKAELVPKRVAMLGKNSRYEFYHALSLKEEEDMILMDIQGYKETVYQSRSIVPSEPDSSPNYPLYRQKLPTIRGVGPINSIRDIKVNSAKNNFLSELKDNNKQQQQQQIGNTNDEHTIKPSQRIKYIAPTPVLNNPNSIVQLLALKPGASKLVEQLKNRMTITTSKINIFDVEDLVPKNSPVLSRKSYKL.

Residues 76 to 262 (LEMNKILKSE…FLISNYLNVF (187 aa)) form the Rho-GAP domain. 2 disordered regions span residues 279–354 (NELL…SSPI) and 472–517 (NSTT…SLIN). Low complexity predominate over residues 281–301 (LLNNNNNNNNVIMPTTTTTTT). Positions 302–311 (SASSSILPTD) are enriched in polar residues. 3 stretches are compositionally biased toward low complexity: residues 328-354 (SIPL…SSPI), 473-498 (STTT…STTT), and 507-517 (SNSASNNSLIN).

It is found in the cytoplasm. Its function is as follows. Rho GTPase-activating protein involved in the signal transduction pathway. This chain is Rho GTPase-activating protein gacE (gacE), found in Dictyostelium discoideum (Social amoeba).